Consider the following 647-residue polypeptide: Chaperone protein DnaK (647 aa).

Phosphothreonine; by autocatalysis is present on threonine 198. A disordered region spans residues 603–647 (EQAQGAGGAQGFDPNAFQGGDAGQQQKADDGVVDAEFTEVKDDKK). Residues 618–628 (AFQGGDAGQQQ) show a composition bias toward low complexity.

Belongs to the heat shock protein 70 family.

In terms of biological role, acts as a chaperone. The polypeptide is Chaperone protein DnaK (Acinetobacter baylyi (strain ATCC 33305 / BD413 / ADP1)).